The following is a 1170-amino-acid chain: Integrin alpha-2 (1170 aa).

An N-terminal signal peptide occupies residues 1–18 (PLQLVLVFSQGILNCCVA). Over 19-1121 (YNVGLPKAKI…KPHEKVEVPT (1103 aa)) the chain is Extracellular. FG-GAP repeat units follow at residues 23-81 (LPKA…TTTC) and 90-150 (TSMS…LRTS). A disulfide bridge connects residues Cys-72 and Cys-81. N-linked (GlcNAc...) asparagine glycans are attached at residues Asn-94, Asn-101, and Asn-332. The VWFA domain maps to 177–354 (WDAVKNFLEK…TIGEQIFSIE (178 aa)). 5 FG-GAP repeats span residues 355-409 (GTVQ…LIFS), 412-464 (AFEQ…ENGN), 466-528 (TVIQ…ILNW), 529-587 (HQFL…MIRL), and 591-653 (QKIL…FTPK). N-linked (GlcNAc...) asparagine glycosylation is found at Asn-421, Asn-449, and Asn-464. Residues 472 to 474 (RGD) carry the Cell attachment site motif. The Ca(2+) site is built by Asp-488, Asn-490, Asp-492, Asp-496, Asp-552, Asn-554, Asp-556, Asp-560, Asp-616, Asn-618, Asp-620, and Asp-624. A disulfide bridge connects residues Cys-669 and Cys-726. N-linked (GlcNAc...) asparagine glycosylation is found at Asn-688 and Asn-748. Cystine bridges form between Cys-778–Cys-784 and Cys-854–Cys-865. N-linked (GlcNAc...) asparagine glycosylation is present at Asn-945. Disulfide bonds link Cys-1008–Cys-1039 and Cys-1044–Cys-1049. 2 N-linked (GlcNAc...) asparagine glycosylation sites follow: Asn-1063 and Asn-1070. The chain crosses the membrane as a helical span at residues 1122 to 1143 (GVIVGSVIAGILLLLALVAILW). Residues 1144 to 1170 (KLGFFKRKYEKMAKNPDETDETTELNS) lie on the Cytoplasmic side of the membrane. Residues 1146–1150 (GFFKR) carry the GFFKR motif motif.

It belongs to the integrin alpha chain family. As to quaternary structure, heterodimer of an alpha and a beta subunit. Alpha-2 associates with beta-1. Interacts with HPS5 and RAB21.

The protein resides in the membrane. Functionally, integrin alpha-2/beta-1 is a receptor for laminin, collagen, collagen C-propeptides, fibronectin and E-cadherin. It recognizes the proline-hydroxylated sequence G-F-P-G-E-R in collagen. It is responsible for adhesion of platelets and other cells to collagens, modulation of collagen and collagenase gene expression, force generation and organization of newly synthesized extracellular matrix. This Bos taurus (Bovine) protein is Integrin alpha-2 (ITGA2).